Consider the following 165-residue polypeptide: MASTYSFDVVSDFDHQELVNAIDQLKREISQRYDLKESNSEVELEEEKIIITTSSDMTLQAIEGVLLQKATKRKLSLKIFDFQPSETSSGNRVRQIVNLRKGLSQDMAKKLSKAVRDQLKKVTVSIQGDSLRVTGKSKDDLQSAIEIFRKKEEELDIPLQFENYR.

It belongs to the YajQ family.

Nucleotide-binding protein. In Prochlorococcus marinus (strain MIT 9211), this protein is Nucleotide-binding protein P9211_04811.